Here is a 288-residue protein sequence, read N- to C-terminus: 4-hydroxy-3-methylbut-2-enyl diphosphate reductase (288 aa).

Cysteine 12 is a [4Fe-4S] cluster binding site. Positions 42 and 77 each coordinate (2E)-4-hydroxy-3-methylbut-2-enyl diphosphate. Dimethylallyl diphosphate is bound by residues histidine 42 and histidine 77. 2 residues coordinate isopentenyl diphosphate: histidine 42 and histidine 77. Position 99 (cysteine 99) interacts with [4Fe-4S] cluster. Residue histidine 127 coordinates (2E)-4-hydroxy-3-methylbut-2-enyl diphosphate. A dimethylallyl diphosphate-binding site is contributed by histidine 127. Histidine 127 contributes to the isopentenyl diphosphate binding site. Catalysis depends on glutamate 129, which acts as the Proton donor. Threonine 165 contacts (2E)-4-hydroxy-3-methylbut-2-enyl diphosphate. Cysteine 193 is a binding site for [4Fe-4S] cluster. Serine 221, serine 222, asparagine 223, and serine 265 together coordinate (2E)-4-hydroxy-3-methylbut-2-enyl diphosphate. Residues serine 221, serine 222, asparagine 223, and serine 265 each contribute to the dimethylallyl diphosphate site. Serine 221, serine 222, asparagine 223, and serine 265 together coordinate isopentenyl diphosphate.

Belongs to the IspH family. [4Fe-4S] cluster serves as cofactor.

The catalysed reaction is isopentenyl diphosphate + 2 oxidized [2Fe-2S]-[ferredoxin] + H2O = (2E)-4-hydroxy-3-methylbut-2-enyl diphosphate + 2 reduced [2Fe-2S]-[ferredoxin] + 2 H(+). It catalyses the reaction dimethylallyl diphosphate + 2 oxidized [2Fe-2S]-[ferredoxin] + H2O = (2E)-4-hydroxy-3-methylbut-2-enyl diphosphate + 2 reduced [2Fe-2S]-[ferredoxin] + 2 H(+). It participates in isoprenoid biosynthesis; dimethylallyl diphosphate biosynthesis; dimethylallyl diphosphate from (2E)-4-hydroxy-3-methylbutenyl diphosphate: step 1/1. The protein operates within isoprenoid biosynthesis; isopentenyl diphosphate biosynthesis via DXP pathway; isopentenyl diphosphate from 1-deoxy-D-xylulose 5-phosphate: step 6/6. Functionally, catalyzes the conversion of 1-hydroxy-2-methyl-2-(E)-butenyl 4-diphosphate (HMBPP) into a mixture of isopentenyl diphosphate (IPP) and dimethylallyl diphosphate (DMAPP). Acts in the terminal step of the DOXP/MEP pathway for isoprenoid precursor biosynthesis. This is 4-hydroxy-3-methylbut-2-enyl diphosphate reductase from Thermoanaerobacter pseudethanolicus (strain ATCC 33223 / 39E) (Clostridium thermohydrosulfuricum).